We begin with the raw amino-acid sequence, 90 residues long: Small ribosomal subunit protein bS20 (90 aa).

Residues Met1–Met28 are disordered.

It belongs to the bacterial ribosomal protein bS20 family.

In terms of biological role, binds directly to 16S ribosomal RNA. This Rhodopirellula baltica (strain DSM 10527 / NCIMB 13988 / SH1) protein is Small ribosomal subunit protein bS20.